We begin with the raw amino-acid sequence, 203 residues long: ATP-dependent Clp protease proteolytic subunit 1 (203 aa).

S101 serves as the catalytic Nucleophile. H126 is a catalytic residue.

It belongs to the peptidase S14 family. Fourteen ClpP subunits assemble into 2 heptameric rings which stack back to back to give a disk-like structure with a central cavity, resembling the structure of eukaryotic proteasomes.

The protein localises to the cytoplasm. It catalyses the reaction Hydrolysis of proteins to small peptides in the presence of ATP and magnesium. alpha-casein is the usual test substrate. In the absence of ATP, only oligopeptides shorter than five residues are hydrolyzed (such as succinyl-Leu-Tyr-|-NHMec, and Leu-Tyr-Leu-|-Tyr-Trp, in which cleavage of the -Tyr-|-Leu- and -Tyr-|-Trp bonds also occurs).. Cleaves peptides in various proteins in a process that requires ATP hydrolysis. Has a chymotrypsin-like activity. Plays a major role in the degradation of misfolded proteins. In Synechococcus sp. (strain JA-2-3B'a(2-13)) (Cyanobacteria bacterium Yellowstone B-Prime), this protein is ATP-dependent Clp protease proteolytic subunit 1.